Here is a 110-residue protein sequence, read N- to C-terminus: Large ribosomal subunit protein uL22 (110 aa).

It belongs to the universal ribosomal protein uL22 family. In terms of assembly, part of the 50S ribosomal subunit.

This protein binds specifically to 23S rRNA; its binding is stimulated by other ribosomal proteins, e.g. L4, L17, and L20. It is important during the early stages of 50S assembly. It makes multiple contacts with different domains of the 23S rRNA in the assembled 50S subunit and ribosome. In terms of biological role, the globular domain of the protein is located near the polypeptide exit tunnel on the outside of the subunit, while an extended beta-hairpin is found that lines the wall of the exit tunnel in the center of the 70S ribosome. The protein is Large ribosomal subunit protein uL22 of Colwellia psychrerythraea (strain 34H / ATCC BAA-681) (Vibrio psychroerythus).